The chain runs to 249 residues: MNAVITSLVFISLVGVGYSWRYPRNADQTFWAFRTCQRQSEGAKSLREWYRWNLPNDEDTHCYVKCVWLHLGLYNEQNKSLRVDRIMEQFNSRSVAIPGGINTISGPTDGTCKDIYDKTINFFNNNVNDLRTAFYGIKKLSDEWFTQNSNTKPKGTKISDFCNAENREKGGADCQHACSAYYYRLVDEDNEPIHFRNLNILGITDEQFASCVKASKNKQGCKVADTMYNCVEKHNSQALKILDNQSPTY.

Residues 1–19 (MNAVITSLVFISLVGVGYS) form the signal peptide. Disulfide bonds link Cys36–Cys66 and Cys62–Cys112. Trp49 contacts thromboxane A2. Residue Trp52 participates in leukotriene C4 binding. Tyr63 is a binding site for thromboxane A2. Leukotriene C4-binding residues include Gly136 and Lys154. Thromboxane A2 is bound at residue Lys154. Cystine bridges form between Cys162/Cys178, Cys174/Cys221, and Cys211/Cys230.

Belongs to the PBP/GOBP family.

It localises to the secreted. In terms of biological role, modulates blood feeding of female sandflies on vertebrate species by binding and sequestering different mediators involved in the host response. Binds leukotriene C4, leukotriene D4, leukotriene E4 and U-46619, a stable analog of thromboxane A2. Does not bind histamine or serotonin. Inhibits platelet aggregation induced by low concentrations of collagen in thromboxane A2-dependent manner. This chain is Long form salivary protein D7L, found in Phlebotomus duboscqi (Sandfly).